Here is a 279-residue protein sequence, read N- to C-terminus: 4-hydroxy-3-methylbut-2-enyl diphosphate reductase (279 aa).

Cys12 is a [4Fe-4S] cluster binding site. Positions 40 and 70 each coordinate (2E)-4-hydroxy-3-methylbut-2-enyl diphosphate. Residues His40 and His70 each coordinate dimethylallyl diphosphate. Isopentenyl diphosphate is bound by residues His40 and His70. Cys92 serves as a coordination point for [4Fe-4S] cluster. His119 is a binding site for (2E)-4-hydroxy-3-methylbut-2-enyl diphosphate. His119 contacts dimethylallyl diphosphate. His119 serves as a coordination point for isopentenyl diphosphate. The active-site Proton donor is Glu121. Thr151 serves as a coordination point for (2E)-4-hydroxy-3-methylbut-2-enyl diphosphate. Cys181 contacts [4Fe-4S] cluster. Residues Ser209, Ser210, Asn211, and Ser251 each contribute to the (2E)-4-hydroxy-3-methylbut-2-enyl diphosphate site. 4 residues coordinate dimethylallyl diphosphate: Ser209, Ser210, Asn211, and Ser251. Residues Ser209, Ser210, Asn211, and Ser251 each contribute to the isopentenyl diphosphate site.

Belongs to the IspH family. The cofactor is [4Fe-4S] cluster.

The enzyme catalyses isopentenyl diphosphate + 2 oxidized [2Fe-2S]-[ferredoxin] + H2O = (2E)-4-hydroxy-3-methylbut-2-enyl diphosphate + 2 reduced [2Fe-2S]-[ferredoxin] + 2 H(+). It carries out the reaction dimethylallyl diphosphate + 2 oxidized [2Fe-2S]-[ferredoxin] + H2O = (2E)-4-hydroxy-3-methylbut-2-enyl diphosphate + 2 reduced [2Fe-2S]-[ferredoxin] + 2 H(+). It participates in isoprenoid biosynthesis; dimethylallyl diphosphate biosynthesis; dimethylallyl diphosphate from (2E)-4-hydroxy-3-methylbutenyl diphosphate: step 1/1. The protein operates within isoprenoid biosynthesis; isopentenyl diphosphate biosynthesis via DXP pathway; isopentenyl diphosphate from 1-deoxy-D-xylulose 5-phosphate: step 6/6. Functionally, catalyzes the conversion of 1-hydroxy-2-methyl-2-(E)-butenyl 4-diphosphate (HMBPP) into a mixture of isopentenyl diphosphate (IPP) and dimethylallyl diphosphate (DMAPP). Acts in the terminal step of the DOXP/MEP pathway for isoprenoid precursor biosynthesis. This chain is 4-hydroxy-3-methylbut-2-enyl diphosphate reductase, found in Thermotoga neapolitana (strain ATCC 49049 / DSM 4359 / NBRC 107923 / NS-E).